The chain runs to 185 residues: TRAF-interacting protein with FHA domain-containing protein A (185 aa).

A Phosphothreonine modification is found at Thr9. The FHA domain occupies 48-104; the sequence is VKFGRNSNMCQYTFQDKQVSRVQFALQPFKQFNSSVLSFEIKNMSKKTSLMVDNQEL.

The protein belongs to the TIFA family. As to quaternary structure, homooligomer; homooligomerizes following phosphorylation at Thr-9. Interacts with IRAK1, TRAF2 and TRAF6. Interacts with TIFAB; binding to TIFAB inhibits TRAF6 activation, possibly by inducing a conformational change in TIFA. Interacts with ZCCHC11; binding to ZCCHC11 suppresses the TRAF6-dependent activation of NF-kappa-B. In terms of processing, phosphorylated at Thr-9 following detection of ADP-D-glycero-beta-D-manno-heptose (ADP-Heptose) by ALPK1. Phosphorylation at Thr-9 by ALPK1 leads to the formation of an intermolecular binding between the FHA domain and phosphorylated Thr-9, promoting TIFA oligomerization and TIFA-mediated NF-kappa-B activation.

Its subcellular location is the cytoplasm. Adapter molecule that plays a key role in the activation of pro-inflammatory NF-kappa-B signaling following detection of bacterial pathogen-associated molecular pattern metabolites (PAMPs). Promotes activation of an innate immune response by inducing the oligomerization and polyubiquitination of TRAF6, which leads to the activation of TAK1 and IKK through a proteasome-independent mechanism. TIFA-dependent innate immune response is triggered by ADP-D-glycero-beta-D-manno-heptose (ADP-Heptose), a potent PAMP present in all Gram-negative and some Gram-positive bacteria: ADP-Heptose is recognized by ALPK1, which phosphorylates TIFA at Thr-9, leading to TIFA homooligomerization and subsequent activation of pro-inflammatory NF-kappa-B signaling. The sequence is that of TRAF-interacting protein with FHA domain-containing protein A from Rattus norvegicus (Rat).